A 537-amino-acid chain; its full sequence is MGEIWSELKAHHSAKSRRKMLDLFEKGNRVQAFSATVDGLYFDFSKTNLDDGALSLLLELARVKGVESRRAAMFAGDKINETEGRAVLHTALRAPAGPIKVDGQDIMPGVLETRARCFTFAQQVRDGSFTAQGGRITDVVNIGIGGSDLGPAMATLALAPYHDGPRLHYVSNVDGADMNGALQGIDPKTTLVIVASKTFTTIETMTNAQTARDWMAQDVADPSAQFVALSSSTEKAGAFGIPPERTFGFEDWVGGRYSLWGPIGLGLMIAIGPEAFQQFLDGAATMDRHFQEADLADNLPVLLALVGMWHNQVEGHATRAVLPYDNRLSRLPAYLQQLEMESNGKSVAMDGSALQQNSGPVVWGEPGTNGQHAFYQLIHQGTRVVPCEFLVAAKGHEPDLTHHHRLLVANCLAQSEALMRGRSMEEARALMAAKGLEGAELERQAAHRVFPGNRPSTTLLYDQLTPFTLGQIIALYEHRVFVEGVILGINSFDQWGVELGKELATALEPVLTGKDDGAGKDGSTLALVDAVKAVGGI.

Glu-341 acts as the Proton donor in catalysis. Active-site residues include His-372 and Lys-501.

This sequence belongs to the GPI family.

Its subcellular location is the cytoplasm. The enzyme catalyses alpha-D-glucose 6-phosphate = beta-D-fructose 6-phosphate. It participates in carbohydrate biosynthesis; gluconeogenesis. It functions in the pathway carbohydrate degradation; glycolysis; D-glyceraldehyde 3-phosphate and glycerone phosphate from D-glucose: step 2/4. Its function is as follows. Catalyzes the reversible isomerization of glucose-6-phosphate to fructose-6-phosphate. The sequence is that of Glucose-6-phosphate isomerase from Jannaschia sp. (strain CCS1).